Consider the following 338-residue polypeptide: Holliday junction branch migration complex subunit RuvB (338 aa).

Residues 1 to 180 (MERLLDNKFS…FGIIERLDYY (180 aa)) are large ATPase domain (RuvB-L). ATP-binding residues include leucine 19, arginine 20, glycine 61, lysine 64, threonine 65, threonine 66, arginine 170, tyrosine 180, and arginine 217. Threonine 65 provides a ligand contact to Mg(2+). The tract at residues 181-251 (TVEELSQIVM…VAKSGLEMFE (71 aa)) is small ATPAse domain (RuvB-S). The interval 254 to 338 (EYGLDLVDRN…FKLKESGDNR (85 aa)) is head domain (RuvB-H). DNA contacts are provided by lysine 309 and arginine 314.

The protein belongs to the RuvB family. Homohexamer. Forms an RuvA(8)-RuvB(12)-Holliday junction (HJ) complex. HJ DNA is sandwiched between 2 RuvA tetramers; dsDNA enters through RuvA and exits via RuvB. An RuvB hexamer assembles on each DNA strand where it exits the tetramer. Each RuvB hexamer is contacted by two RuvA subunits (via domain III) on 2 adjacent RuvB subunits; this complex drives branch migration. In the full resolvosome a probable DNA-RuvA(4)-RuvB(12)-RuvC(2) complex forms which resolves the HJ.

The protein localises to the cytoplasm. The catalysed reaction is ATP + H2O = ADP + phosphate + H(+). The RuvA-RuvB-RuvC complex processes Holliday junction (HJ) DNA during genetic recombination and DNA repair, while the RuvA-RuvB complex plays an important role in the rescue of blocked DNA replication forks via replication fork reversal (RFR). RuvA specifically binds to HJ cruciform DNA, conferring on it an open structure. The RuvB hexamer acts as an ATP-dependent pump, pulling dsDNA into and through the RuvAB complex. RuvB forms 2 homohexamers on either side of HJ DNA bound by 1 or 2 RuvA tetramers; 4 subunits per hexamer contact DNA at a time. Coordinated motions by a converter formed by DNA-disengaged RuvB subunits stimulates ATP hydrolysis and nucleotide exchange. Immobilization of the converter enables RuvB to convert the ATP-contained energy into a lever motion, pulling 2 nucleotides of DNA out of the RuvA tetramer per ATP hydrolyzed, thus driving DNA branch migration. The RuvB motors rotate together with the DNA substrate, which together with the progressing nucleotide cycle form the mechanistic basis for DNA recombination by continuous HJ branch migration. Branch migration allows RuvC to scan DNA until it finds its consensus sequence, where it cleaves and resolves cruciform DNA. The polypeptide is Holliday junction branch migration complex subunit RuvB (Caldicellulosiruptor bescii (strain ATCC BAA-1888 / DSM 6725 / KCTC 15123 / Z-1320) (Anaerocellum thermophilum)).